The sequence spans 171 residues: Transcription antitermination protein NusB (171 aa).

Belongs to the NusB family.

Its function is as follows. Involved in transcription antitermination. Required for transcription of ribosomal RNA (rRNA) genes. Binds specifically to the boxA antiterminator sequence of the ribosomal RNA (rrn) operons. The chain is Transcription antitermination protein NusB from Brucella abortus (strain S19).